A 386-amino-acid chain; its full sequence is Ovalbumin (386 aa).

N-acetylglycine is present on G2. The segment at residues 22–48 is a signal peptide (not cleaved); it reads HHANENIFYSPFTIISALAMVYLGAKD. A Phosphoserine modification is found at S69. C74 and C121 form a disulfide bridge. 2 N-linked (GlcNAc...) asparagine glycosylation sites follow: N293 and N312. S345 bears the Phosphoserine mark. N-linked (GlcNAc...) asparagine glycosylation occurs at N372.

This sequence belongs to the serpin family. Ov-serpin subfamily. The signal sequence is not cleaved. The functional signal for membrane translocation of ovalbumin becomes accessible when the nascent chain is 50 to 60 residues long. The hydrophobic sequence which lies between residues 27 and 43 folds back on the preceding residues to form an amphipathic hairpin structure which is the signal element recognized by the membrane. In terms of tissue distribution, major protein of egg white.

It is found in the secreted. Functionally, storage protein of egg white. Lack protease inhibitory activity. This Meleagris gallopavo (Wild turkey) protein is Ovalbumin (SERPINB14).